We begin with the raw amino-acid sequence, 117 residues long: Aspartate 1-decarboxylase (117 aa).

Residue Ser-25 is the Schiff-base intermediate with substrate; via pyruvic acid of the active site. The residue at position 25 (Ser-25) is a Pyruvic acid (Ser). Thr-57 serves as a coordination point for substrate. Tyr-58 functions as the Proton donor in the catalytic mechanism. 73–75 (GAA) is a binding site for substrate.

It belongs to the PanD family. As to quaternary structure, heterooctamer of four alpha and four beta subunits. Pyruvate is required as a cofactor. Post-translationally, is synthesized initially as an inactive proenzyme, which is activated by self-cleavage at a specific serine bond to produce a beta-subunit with a hydroxyl group at its C-terminus and an alpha-subunit with a pyruvoyl group at its N-terminus.

It localises to the cytoplasm. The catalysed reaction is L-aspartate + H(+) = beta-alanine + CO2. It participates in cofactor biosynthesis; (R)-pantothenate biosynthesis; beta-alanine from L-aspartate: step 1/1. In terms of biological role, catalyzes the pyruvoyl-dependent decarboxylation of aspartate to produce beta-alanine. This chain is Aspartate 1-decarboxylase, found in Bacteroides fragilis (strain ATCC 25285 / DSM 2151 / CCUG 4856 / JCM 11019 / LMG 10263 / NCTC 9343 / Onslow / VPI 2553 / EN-2).